The primary structure comprises 87 residues: Protein anon-73B1 (87 aa).

Residues 25-47 (LLIRYGLYVGALFQFVCISAAVL) traverse the membrane as a helical segment. Residues 52 to 87 (PDVNSNPETGEVTEREGEPVRTRLHKIRKLEKKKRR) are disordered. Positions 63 to 72 (VTEREGEPVR) are enriched in basic and acidic residues. The segment covering 73 to 87 (TRLHKIRKLEKKKRR) has biased composition (basic residues).

It belongs to the UPF0239 family.

The protein localises to the membrane. The chain is Protein anon-73B1 from Drosophila erecta (Fruit fly).